A 421-amino-acid polypeptide reads, in one-letter code: Histidine--tRNA ligase (421 aa).

It belongs to the class-II aminoacyl-tRNA synthetase family. Homodimer.

Its subcellular location is the cytoplasm. It carries out the reaction tRNA(His) + L-histidine + ATP = L-histidyl-tRNA(His) + AMP + diphosphate + H(+). In Francisella tularensis subsp. holarctica (strain FTNF002-00 / FTA), this protein is Histidine--tRNA ligase.